The following is a 363-amino-acid chain: 3-dehydroquinate synthase (363 aa).

NAD(+) is bound by residues 134-135, Lys147, Lys156, and 174-177; these read TT and TLIT. Zn(2+)-binding residues include Glu189, His254, and His271.

Belongs to the sugar phosphate cyclases superfamily. Dehydroquinate synthase family. The cofactor is NAD(+). Requires Co(2+) as cofactor. It depends on Zn(2+) as a cofactor.

It localises to the cytoplasm. It catalyses the reaction 7-phospho-2-dehydro-3-deoxy-D-arabino-heptonate = 3-dehydroquinate + phosphate. It functions in the pathway metabolic intermediate biosynthesis; chorismate biosynthesis; chorismate from D-erythrose 4-phosphate and phosphoenolpyruvate: step 2/7. Catalyzes the conversion of 3-deoxy-D-arabino-heptulosonate 7-phosphate (DAHP) to dehydroquinate (DHQ). In Prochlorococcus marinus subsp. pastoris (strain CCMP1986 / NIES-2087 / MED4), this protein is 3-dehydroquinate synthase.